A 233-amino-acid chain; its full sequence is Ribonuclease HII (233 aa).

The region spanning lysine 21–leucine 211 is the RNase H type-2 domain. 3 residues coordinate a divalent metal cation: aspartate 27, glutamate 28, and aspartate 119.

It belongs to the RNase HII family. The cofactor is Mn(2+). Requires Mg(2+) as cofactor.

The protein resides in the cytoplasm. The catalysed reaction is Endonucleolytic cleavage to 5'-phosphomonoester.. Functionally, endonuclease that specifically degrades the RNA of RNA-DNA hybrids. This Streptomyces coelicolor (strain ATCC BAA-471 / A3(2) / M145) protein is Ribonuclease HII (rnhB).